The sequence spans 241 residues: Probable transcriptional regulatory protein AZOSEA20720 (241 aa).

Positions 1–21 (MAGHSKWANIQHRKGRQDAKR) are disordered.

Belongs to the TACO1 family.

Its subcellular location is the cytoplasm. This is Probable transcriptional regulatory protein AZOSEA20720 from Aromatoleum aromaticum (strain DSM 19018 / LMG 30748 / EbN1) (Azoarcus sp. (strain EbN1)).